Consider the following 163-residue polypeptide: Phosphopantetheine adenylyltransferase (163 aa).

Residue Ser-11 coordinates substrate. ATP is bound by residues 11–12 (SF) and His-19. Residues Lys-43, Leu-75, and Arg-89 each contribute to the substrate site. ATP contacts are provided by residues 90 to 92 (GLR), Glu-100, and 125 to 131 (FGYLSSS).

This sequence belongs to the bacterial CoaD family. As to quaternary structure, homohexamer. Requires Mg(2+) as cofactor.

The protein localises to the cytoplasm. The enzyme catalyses (R)-4'-phosphopantetheine + ATP + H(+) = 3'-dephospho-CoA + diphosphate. Its pathway is cofactor biosynthesis; coenzyme A biosynthesis; CoA from (R)-pantothenate: step 4/5. In terms of biological role, reversibly transfers an adenylyl group from ATP to 4'-phosphopantetheine, yielding dephospho-CoA (dPCoA) and pyrophosphate. The polypeptide is Phosphopantetheine adenylyltransferase (Geobacter metallireducens (strain ATCC 53774 / DSM 7210 / GS-15)).